Here is a 338-residue protein sequence, read N- to C-terminus: MRASFVVTAPLLAAAVHGYAAPGACSGACNIHDPSLIRRESDGKYFRFSTGNKISYASASSIEGPWTTIGSMLPDGSSIDLPGNDDLWVSAHATWTGVPHANREYQAPDAQIVNGVYHVYYSVSSFGSQNSAIGLATSTSMDAGTWTDHGSTGIQSSSSKNYNAIDGNLFNDGGTYYMNFGSFWADIFQAPMNSAATKVASSSYGIAYDPSGTHAVEGSYLYKYGNYYYLFYSWGICCGYDTSRPAAGQEYKIKVCRSTSATGNFVDADGVACTNGGGTVVLESHDNVYGPGGQGVFTDPNLGPVLYYHYVDTNIGYADGQKLFGWNVLDFSSGWPVV.

The N-terminal stretch at 1–20 (MRASFVVTAPLLAAAVHGYA) is a signal peptide. Asp33 acts as the Proton acceptor in catalysis. Glu217 acts as the Proton donor in catalysis.

The protein belongs to the glycosyl hydrolase 43 family.

Its subcellular location is the secreted. It catalyses the reaction Endohydrolysis of (1-&gt;5)-alpha-arabinofuranosidic linkages in (1-&gt;5)-arabinans.. It participates in glycan metabolism; L-arabinan degradation. Functionally, endo-1,5-alpha-L-arabinanase involved in degradation of pectin. Its preferred substrate is linear 1,5-alpha-L-arabinan. This is Probable arabinan endo-1,5-alpha-L-arabinosidase A (abnA) from Aspergillus terreus (strain NIH 2624 / FGSC A1156).